Consider the following 343-residue polypeptide: Aspartate carbamoyltransferase catalytic subunit (343 aa).

The carbamoyl phosphate site is built by Arg71 and Thr72. L-aspartate is bound at residue Lys99. Carbamoyl phosphate contacts are provided by Arg121, His149, and Gln152. The L-aspartate site is built by Arg195 and Arg249. Carbamoyl phosphate contacts are provided by Gly290 and Pro291.

The protein belongs to the aspartate/ornithine carbamoyltransferase superfamily. ATCase family. In terms of assembly, heterododecamer (2C3:3R2) of six catalytic PyrB chains organized as two trimers (C3), and six regulatory PyrI chains organized as three dimers (R2).

It catalyses the reaction carbamoyl phosphate + L-aspartate = N-carbamoyl-L-aspartate + phosphate + H(+). The protein operates within pyrimidine metabolism; UMP biosynthesis via de novo pathway; (S)-dihydroorotate from bicarbonate: step 2/3. In terms of biological role, catalyzes the condensation of carbamoyl phosphate and aspartate to form carbamoyl aspartate and inorganic phosphate, the committed step in the de novo pyrimidine nucleotide biosynthesis pathway. In Rhodopirellula baltica (strain DSM 10527 / NCIMB 13988 / SH1), this protein is Aspartate carbamoyltransferase catalytic subunit.